Reading from the N-terminus, the 605-residue chain is Putative glutaminase 2 (605 aa).

Positions 213, 262, 308, 315, 342, 394, and 412 each coordinate substrate. 2 ANK repeats span residues 480-509 (DRLI…DLNT) and 513-543 (DDRT…DVDK). Residues 569-581 (KAMKRPEQHRKDS) are compositionally biased toward basic and acidic residues. Positions 569 to 605 (KAMKRPEQHRKDSVSSLDTDDEIDDDGFPEKPSFTID) are disordered. The segment covering 586 to 595 (DTDDEIDDDG) has biased composition (acidic residues).

Belongs to the glutaminase family.

It carries out the reaction L-glutamine + H2O = L-glutamate + NH4(+). This is Putative glutaminase 2 (glna-2) from Caenorhabditis elegans.